Here is a 32-residue protein sequence, read N- to C-terminus: Peptide tarsal-less AA (32 aa).

The interval Met1–Tyr32 is disordered. Residues Leu2 to Tyr8 form repeat 1. The interval Leu2 to Tyr32 is 2 X 7 AA repeats of L-D-P-T-G-[TQ]-Y. The span at Arg10–Cys25 shows a compositional bias: basic and acidic residues. Repeat 2 spans residues Leu26 to Tyr32.

The protein resides in the cytoplasm. It is found in the nucleus. Its function is as follows. One of four peptides (tal-1A, tal-2A, tal-3A and tal-AA) produced from a polycistronic gene that function redundantly in several developmental processes. Required in early stages of leg development for the intercalation of the tarsal segments during the mid-third instar stage and later for tarsal joint formation. Promotes the post-translational modification of ovo isoform B (svb) into its active form which in turn initiates trichome development and promotes tarsal joint development. This is likely due to recruitment of the E3 ubiquitin-protein ligase Ubr3 to svb for ubiquitination of its N-terminus, converting svb into a transcriptional activator. Also enhances interaction of Ubr3 with Diap1. Required for correct wing and leg formation through its regulation of several genes including those in the Notch signaling pathway. Essential for denticle formation and may have a role in the developmental timing of trichome differentiation. Essential for the development of taenidial folds in the trachea. The chain is Peptide tarsal-less AA from Drosophila melanogaster (Fruit fly).